We begin with the raw amino-acid sequence, 520 residues long: Solute carrier family 2, facilitated glucose transporter member 14 (520 aa).

Residues 1–29 lie on the Cytoplasmic side of the membrane; that stretch reads MEFHNGGHVSGIGGFLVSLTSRMKPHTLA. A helical membrane pass occupies residues 30 to 50; sequence VTPALIFAITVATIGSFQFGY. Residues 51–88 are Extracellular-facing; sequence NTGVINAPETIIKEFINKTLTDKANAPPSEVLLTNLWS. An N-linked (GlcNAc...) asparagine glycan is attached at Asn67. The helical transmembrane segment at 89-109 threads the bilayer; sequence LSVAIFSVGGMIGSFSVGLFV. The Cytoplasmic segment spans residues 110–117; the sequence is NRFGRRNS. Residues 118–138 traverse the membrane as a helical segment; that stretch reads MLIVNLLAATGGCLMGLCKIA. At 139–148 the chain is on the extracellular side; the sequence is ESVEMLILGR. Residues 149–169 form a helical membrane-spanning segment; that stretch reads LVIGLFCGLCTGFVPMYIGEI. Residues 170-177 are Cytoplasmic-facing; sequence SPTALRGA. The chain crosses the membrane as a helical span at residues 178–198; that stretch reads FGTLNQLGIVIGILVAQIFGL. D-glucose is bound at residue Gln183. Topologically, residues 199-207 are extracellular; the sequence is ELILGSEEL. Residues 208 to 228 traverse the membrane as a helical segment; the sequence is WPVLLGFTILPAILQSAALPC. Residues 229-293 lie on the Cytoplasmic side of the membrane; the sequence is CPESPRFLLI…LFRVSSYRQP (65 aa). A helical membrane pass occupies residues 294–314; sequence IIISIVLQLSQQLSGINAVFY. D-glucose contacts are provided by residues 304 to 305 and Asn310; that span reads QQ. The Extracellular segment spans residues 315–328; sequence YSTGIFKDAGVQQP. The chain crosses the membrane as a helical span at residues 329–349; that stretch reads IYATISAGVVNTIFTLLSLFL. D-glucose is bound at residue Asn339. At 350–358 the chain is on the cytoplasmic side; that stretch reads VERAGRRTL. The chain crosses the membrane as a helical span at residues 359-379; that stretch reads HMIGLGGMAFCSTLMTVSLLL. The Extracellular portion of the chain corresponds to 380 to 392; sequence KNHYNGMSFVCIG. Residues 393–413 traverse the membrane as a helical segment; that stretch reads AILVFVACFEIGPGPIPWFIV. D-glucose-binding residues include Glu402 and Trp410. Residues 414–423 lie on the Cytoplasmic side of the membrane; the sequence is AELFSQGPRP. Residues 424-444 form a helical membrane-spanning segment; sequence AAMAVAGCSNWTSNFLVGLLF. The Extracellular segment spans residues 445–451; sequence PSAAYYL. The helical transmembrane segment at 452–472 threads the bilayer; the sequence is GAYVFIIFTGFLITFLAFTFF. Residues 473–520 lie on the Cytoplasmic side of the membrane; that stretch reads KVPETRGRTFEDITRAFEGQAHGADRSGKDGVMGMNSIEPAKETTTNV. Positions 493-520 are disordered; that stretch reads AHGADRSGKDGVMGMNSIEPAKETTTNV.

It belongs to the major facilitator superfamily. Sugar transporter (TC 2.A.1.1) family. Glucose transporter subfamily. As to expression, mainly expressed in testis. Also expressed in small intestine, liver and kidney.

It is found in the cell membrane. It catalyses the reaction D-glucose(out) = D-glucose(in). The catalysed reaction is L-dehydroascorbate(out) = L-dehydroascorbate(in). Hexose transporter that can mediate the transport of glucose and dehydroascorbate across the cell membrane. The chain is Solute carrier family 2, facilitated glucose transporter member 14 from Homo sapiens (Human).